The primary structure comprises 90 residues: Small ribosomal subunit protein bS20 (90 aa).

Over residues 1-11 (MAHHKSAKKRI) the composition is skewed to basic residues. The disordered stretch occupies residues 1-22 (MAHHKSAKKRIRQTERRTEVNR). The span at 12-22 (RQTERRTEVNR) shows a compositional bias: basic and acidic residues.

Belongs to the bacterial ribosomal protein bS20 family.

Binds directly to 16S ribosomal RNA. The protein is Small ribosomal subunit protein bS20 of Paramagnetospirillum magneticum (strain ATCC 700264 / AMB-1) (Magnetospirillum magneticum).